The following is a 170-amino-acid chain: NADH-dependent flavin reductase StyB (170 aa).

Belongs to the non-flavoprotein flavin reductase family. As to quaternary structure, homodimer.

The catalysed reaction is a reduced flavin + NAD(+) = an oxidized flavin + NADH + 2 H(+). It participates in aromatic compound metabolism. Functionally, reductase component of a two-component system that catalyzes the first step in the aerobic styrene degradation pathway by enantioselective epoxidation of the vinyl side chain. Utilizes NADH to reduce FAD, which is then transferred to the styrene monooxygenase StyA. In Pseudomonas fluorescens, this protein is NADH-dependent flavin reductase StyB (styB).